The primary structure comprises 1106 residues: Exportin-T (1106 aa).

The tract at residues 336–357 (TPLESRTRTGPSAQNGQSDTSD) is disordered. A compositionally biased stretch (polar residues) spans 343–357 (RTGPSAQNGQSDTSD).

The protein belongs to the exportin family.

Its subcellular location is the nucleus. The protein localises to the cytoplasm. TRNA nucleus export receptor which facilitates tRNA translocation across the nuclear pore complex. Involved in pre-tRNA splicing, probably by affecting the interaction of pre-tRNA with splicing endonuclease. The protein is Exportin-T (LOS1) of Mycosarcoma maydis (Corn smut fungus).